The sequence spans 207 residues: Guanylate kinase (207 aa).

The 179-residue stretch at 7–185 folds into the Guanylate kinase-like domain; sequence GIVLVLCAPS…AYDELRAAYI (179 aa). An ATP-binding site is contributed by 14–21; the sequence is APSGTGKT.

The protein belongs to the guanylate kinase family.

Its subcellular location is the cytoplasm. It carries out the reaction GMP + ATP = GDP + ADP. Functionally, essential for recycling GMP and indirectly, cGMP. The polypeptide is Guanylate kinase (Nitratidesulfovibrio vulgaris (strain ATCC 29579 / DSM 644 / CCUG 34227 / NCIMB 8303 / VKM B-1760 / Hildenborough) (Desulfovibrio vulgaris)).